We begin with the raw amino-acid sequence, 131 residues long: Small ribosomal subunit protein bS16 (131 aa).

Residues 87–117 (IGKSKQEELRKSEAKTSAKNKKANEEKANEE) are compositionally biased toward basic and acidic residues. Positions 87 to 131 (IGKSKQEELRKSEAKTSAKNKKANEEKANEEKVEESETLEASSEA) are disordered.

This sequence belongs to the bacterial ribosomal protein bS16 family.

The sequence is that of Small ribosomal subunit protein bS16 from Prochlorococcus marinus (strain SARG / CCMP1375 / SS120).